Reading from the N-terminus, the 299-residue chain is GTPase Era (299 aa).

One can recognise an Era-type G domain in the interval arginine 9 to glutamate 177. A G1 region spans residues glycine 17–serine 24. Glycine 17–serine 24 contacts GTP. The tract at residues glutamine 43–histidine 47 is G2. Positions aspartate 64–glycine 67 are G3. GTP contacts are provided by residues aspartate 64–leucine 68 and asparagine 126–aspartate 129. The tract at residues asparagine 126–aspartate 129 is G4. The G5 stretch occupies residues valine 156–alanine 158. The 85-residue stretch at valine 200 to glutamate 284 folds into the KH type-2 domain.

The protein belongs to the TRAFAC class TrmE-Era-EngA-EngB-Septin-like GTPase superfamily. Era GTPase family. Monomer.

The protein localises to the cytoplasm. It localises to the cell inner membrane. Functionally, an essential GTPase that binds both GDP and GTP, with rapid nucleotide exchange. Plays a role in 16S rRNA processing and 30S ribosomal subunit biogenesis and possibly also in cell cycle regulation and energy metabolism. The chain is GTPase Era from Xanthomonas oryzae pv. oryzae (strain MAFF 311018).